The primary structure comprises 68 residues: UPF0434 protein BTH_I0741 (68 aa).

The protein belongs to the UPF0434 family.

The protein is UPF0434 protein BTH_I0741 of Burkholderia thailandensis (strain ATCC 700388 / DSM 13276 / CCUG 48851 / CIP 106301 / E264).